Reading from the N-terminus, the 1275-residue chain is uncharacterized protein (1275 aa).

This is an uncharacterized protein from Homo sapiens (Human).